Here is a 124-residue protein sequence, read N- to C-terminus: Membrane-anchored ubiquitin-fold protein 2 (124 aa).

Positions 8-74 constitute a Ubiquitin-like domain; it reads LEIKFRLNDG…LENNKTVGDC (67 aa). 4 S-palmitoyl cysteine lipidation sites follow: C115, C117, C119, and C124.

Post-translationally, acylated protein. Probably modified with palmitate. In terms of tissue distribution, ubiquitous, but three fold higher expression in stamens.

The protein resides in the cell membrane. Its function is as follows. May serve as docking site to facilitate the association of other proteins to the plasma membrane. This Arabidopsis thaliana (Mouse-ear cress) protein is Membrane-anchored ubiquitin-fold protein 2 (MUB2).